Consider the following 90-residue polypeptide: Lectin-1 (90 aa).

Gln-1 carries the pyrrolidone carboxylic acid modification. Cys-46 and Cys-71 are joined by a disulfide.

The N-terminus is blocked. In terms of processing, contains seven disulfide bonds. Post-translationally, proteolytically cleaved. Major form may consist of cleaved, disulfide-bonded subunits.

In terms of biological role, lectin with specificity for complex N-linked glycans and O-linked glycans. Has hemagglutinating activity towards rabbit erythrocytes that is inhibited by N-acetyl-D-galactosamine. The chain is Lectin-1 from Hypnea cervicornis (Brazilian red alga).